The primary structure comprises 145 residues: Cell wall teichoic acid glycosylation protein GtcA (145 aa).

Transmembrane regions (helical) follow at residues 21–41 (ILMYLIMGGFTTLINIVTFWL), 52–69 (IANTIAWVASVLFAYFSN), 96–116 (FLTYLVDILVMILLIEVLSIN), and 121–141 (KIWTNVIVLVLNYVFSKWIIF).

It belongs to the GtrA family.

The protein resides in the cell membrane. Its function is as follows. Involved in the decoration of cell wall teichoic acid with galactose and glucose. The chain is Cell wall teichoic acid glycosylation protein GtcA (gtcA) from Listeria monocytogenes serovar 1/2a (strain ATCC BAA-679 / EGD-e).